A 109-amino-acid polypeptide reads, in one-letter code: Nucleoid-associated protein PM0205 (109 aa).

The protein belongs to the YbaB/EbfC family. As to quaternary structure, homodimer.

The protein resides in the cytoplasm. It localises to the nucleoid. Binds to DNA and alters its conformation. May be involved in regulation of gene expression, nucleoid organization and DNA protection. The protein is Nucleoid-associated protein PM0205 of Pasteurella multocida (strain Pm70).